Consider the following 192-residue polypeptide: MPPLILASSSPYRRELLARLQLPFSVQSPNIDESPQLGEAPEHTALRLAQAKARKVAETFPNALIIGCDQVATLDGLQLGKPLTHDNAVRQLTLMRGRSVVFHSALCVYNALTQEMQADVVPYTVKFRDLSDRQIESYLQKEQPYQCAGSAKSEGLGIAIIAAMQGDDPNALIGLPLIRLIDMLASQGVDVI.

Asp-69 serves as the catalytic Proton acceptor.

Belongs to the Maf family. YceF subfamily. A divalent metal cation is required as a cofactor.

It is found in the cytoplasm. It catalyses the reaction N(7)-methyl-GTP + H2O = N(7)-methyl-GMP + diphosphate + H(+). Nucleoside triphosphate pyrophosphatase that hydrolyzes 7-methyl-GTP (m(7)GTP). May have a dual role in cell division arrest and in preventing the incorporation of modified nucleotides into cellular nucleic acids. The polypeptide is 7-methyl-GTP pyrophosphatase (Methylobacillus flagellatus (strain ATCC 51484 / DSM 6875 / VKM B-1610 / KT)).